Reading from the N-terminus, the 173-residue chain is Alpha-crystallin A chain (173 aa).

At M1 the chain carries N-acetylmethionine. Residues 1–63 form a required for complex formation with BFSP1 and BFSP2 region; it reads MDITIQHPWF…RTVLESGISE (63 aa). Position 6 is a deamidated glutamine; partial (Q6). A Phosphoserine modification is found at S45. Q50 is modified (deamidated glutamine; partial). A sHSP domain is found at 52 to 164; that stretch reads LFRTVLESGI…SDRSIPVSRE (113 aa). N6-acetyllysine is present on residues K70 and K99. Zn(2+)-binding residues include H100, E102, and H107. Phosphoserine is present on S122. Residue N123 is modified to Deamidated asparagine; partial. Positions 146–167 are enriched in basic and acidic residues; the sequence is IHSDMDASHSDRSIPVSREEKP. The segment at 146-173 is disordered; it reads IHSDMDASHSDRSIPVSREEKPTLAPSS. H154 serves as a coordination point for Zn(2+). The O-linked (GlcNAc) serine glycan is linked to S162.

It belongs to the small heat shock protein (HSP20) family. As to quaternary structure, heteromer composed of three CRYAA and one CRYAB subunits. Inter-subunit bridging via zinc ions enhances stability, which is crucial as there is no protein turn over in the lens. Can also form homodimers and homotetramers (dimers of dimers) which serve as the building blocks of homooligomers. Within homooligomers, the zinc-binding motif is created from residues of 3 different molecules. His-100 and Glu-102 from one molecule are ligands of the zinc ion, and His-107 and His-154 residues from additional molecules complete the site with tetrahedral coordination geometry. Part of a complex required for lens intermediate filament formation composed of BFSP1, BFSP2 and CRYAA. Post-translationally, acetylation at Lys-70 may increase chaperone activity. Undergoes age-dependent proteolytical cleavage at the C-terminus.

The protein resides in the cytoplasm. The protein localises to the nucleus. In terms of biological role, contributes to the transparency and refractive index of the lens. Acts as a chaperone, preventing aggregation of various proteins under a wide range of stress conditions. Required for the correct formation of lens intermediate filaments as part of a complex composed of BFSP1, BFSP2 and CRYAA. This Osphranter rufus (Red kangaroo) protein is Alpha-crystallin A chain (CRYAA).